The chain runs to 238 residues: Uridylate kinase (238 aa).

K12–G15 provides a ligand contact to ATP. G54 provides a ligand contact to UMP. ATP is bound by residues G55 and R59. UMP contacts are provided by residues D74 and T135–T142. ATP contacts are provided by T162, Y168, and D171.

Belongs to the UMP kinase family. Homohexamer.

The protein resides in the cytoplasm. It carries out the reaction UMP + ATP = UDP + ADP. The protein operates within pyrimidine metabolism; CTP biosynthesis via de novo pathway; UDP from UMP (UMPK route): step 1/1. With respect to regulation, inhibited by UTP. In terms of biological role, catalyzes the reversible phosphorylation of UMP to UDP. This chain is Uridylate kinase, found in Herminiimonas arsenicoxydans.